The following is a 287-amino-acid chain: MEMO1 family protein MJ0403 (287 aa).

This sequence belongs to the MEMO1 family.

The chain is MEMO1 family protein MJ0403 from Methanocaldococcus jannaschii (strain ATCC 43067 / DSM 2661 / JAL-1 / JCM 10045 / NBRC 100440) (Methanococcus jannaschii).